A 179-amino-acid chain; its full sequence is Large ribosomal subunit protein uL5 (179 aa).

It belongs to the universal ribosomal protein uL5 family. As to quaternary structure, part of the 50S ribosomal subunit; part of the 5S rRNA/L5/L18/L25 subcomplex. Contacts the 5S rRNA and the P site tRNA. Forms a bridge to the 30S subunit in the 70S ribosome.

Its function is as follows. This is one of the proteins that bind and probably mediate the attachment of the 5S RNA into the large ribosomal subunit, where it forms part of the central protuberance. In the 70S ribosome it contacts protein S13 of the 30S subunit (bridge B1b), connecting the 2 subunits; this bridge is implicated in subunit movement. Contacts the P site tRNA; the 5S rRNA and some of its associated proteins might help stabilize positioning of ribosome-bound tRNAs. The chain is Large ribosomal subunit protein uL5 from Rickettsia rickettsii (strain Iowa).